The primary structure comprises 430 residues: Gamma-glutamyl phosphate reductase (430 aa).

This sequence belongs to the gamma-glutamyl phosphate reductase family.

Its subcellular location is the cytoplasm. It carries out the reaction L-glutamate 5-semialdehyde + phosphate + NADP(+) = L-glutamyl 5-phosphate + NADPH + H(+). It participates in amino-acid biosynthesis; L-proline biosynthesis; L-glutamate 5-semialdehyde from L-glutamate: step 2/2. Functionally, catalyzes the NADPH-dependent reduction of L-glutamate 5-phosphate into L-glutamate 5-semialdehyde and phosphate. The product spontaneously undergoes cyclization to form 1-pyrroline-5-carboxylate. This Polaromonas naphthalenivorans (strain CJ2) protein is Gamma-glutamyl phosphate reductase.